Reading from the N-terminus, the 705-residue chain is Polyribonucleotide nucleotidyltransferase (705 aa).

Residues Asp494 and Asp500 each contribute to the Mg(2+) site. Residues 561-620 enclose the KH domain; it reads PRITTVKVKPEKVRAVIGTGGKNIRQIVSETGVTIDVEDDGTVTIASSDMEASARAIAMV. The region spanning 630-698 is the S1 motif domain; the sequence is GKIYRGTVKK…KQGKIRLSRK (69 aa).

The protein belongs to the polyribonucleotide nucleotidyltransferase family. It depends on Mg(2+) as a cofactor.

It localises to the cytoplasm. It carries out the reaction RNA(n+1) + phosphate = RNA(n) + a ribonucleoside 5'-diphosphate. In terms of biological role, involved in mRNA degradation. Catalyzes the phosphorolysis of single-stranded polyribonucleotides processively in the 3'- to 5'-direction. The chain is Polyribonucleotide nucleotidyltransferase from Syntrophus aciditrophicus (strain SB).